A 215-amino-acid polypeptide reads, in one-letter code: Urease accessory protein UreG (215 aa).

Glycine 24 to threonine 31 lines the GTP pocket.

The protein belongs to the SIMIBI class G3E GTPase family. UreG subfamily. Homodimer. UreD, UreF and UreG form a complex that acts as a GTP-hydrolysis-dependent molecular chaperone, activating the urease apoprotein by helping to assemble the nickel containing metallocenter of UreC. The UreE protein probably delivers the nickel.

Its subcellular location is the cytoplasm. In terms of biological role, facilitates the functional incorporation of the urease nickel metallocenter. This process requires GTP hydrolysis, probably effectuated by UreG. The polypeptide is Urease accessory protein UreG (Burkholderia ambifaria (strain MC40-6)).